The sequence spans 365 residues: Quinone oxidoreductase-like protein 2 homolog (365 aa).

The protein belongs to the zinc-containing alcohol dehydrogenase family. Quinone oxidoreductase subfamily.

This is Quinone oxidoreductase-like protein 2 homolog from Nematostella vectensis (Starlet sea anemone).